Here is an 89-residue protein sequence, read N- to C-terminus: Small ribosomal subunit protein uS15 (89 aa).

This sequence belongs to the universal ribosomal protein uS15 family. Part of the 30S ribosomal subunit. Forms a bridge to the 50S subunit in the 70S ribosome, contacting the 23S rRNA.

Its function is as follows. One of the primary rRNA binding proteins, it binds directly to 16S rRNA where it helps nucleate assembly of the platform of the 30S subunit by binding and bridging several RNA helices of the 16S rRNA. Functionally, forms an intersubunit bridge (bridge B4) with the 23S rRNA of the 50S subunit in the ribosome. The polypeptide is Small ribosomal subunit protein uS15 (Latilactobacillus sakei subsp. sakei (strain 23K) (Lactobacillus sakei subsp. sakei)).